The sequence spans 751 residues: MTISPPEREAKKVKIVVDRNPVVTSFEKWAKPGHFSRTLAKGPTTTTWIWDLHADAHDFDSHTTDLEDISPKIFSAHFGQLGVILIWLSGMYFHGARFSNYEAWLSDPTHIKPSAQVVWPIVGQEILNGDVGGGFQGIQITSGFFQLWRASGITSELQLYSTAIGGLLLAAAMFFAGWFHYHKAAPKLEWFQNVESMMNHHLGGLLGLGSLGWAGHQIHVSLPVNKLLNAGVDPKEIPLPHEFLLNRDLMAQLYPSFAKGLTPFFTLNWAEYGDFLTFRGGLNPVTGGLWLSDTAHHHVAIAVLFLVAGHMYRTNWGIGHSMKEILEAHKGPFTGEGHKGLYEILTTSWHAQLAINLALFGSLSIVVAHHMYAMPPYPYLATDYGTQLSLFTHHMWIGGFCVVGAAAHAAIFMVRDYDPTNNYNNLLDRVIRHRDAIISHLNWVCIFLGFHSFGLYIHNDTMSALGRPQDMFSDTAIQLQPVFAQWIHKTHALAPGLTAPNALASTSPSWGGDVVAVGGKVAMMPISLGTADFLVHHIHAFTIHVTVLILLKGVLFARSSRLIPDKANLGFRFPCDGPGRGGTCQVSAWDHVFLGLFWMYNSISVVIFHFSWKMQSDVWGNVTAQGVSHITGGNFALSSNTINGWLRDFLWAQASQVIQSYGSALSAYGLIFLGAHFIWAFSLMFLFSGRGYWQELIESIVWAHNKLKVAPSIQPRALSITQGRAVGVAHYLLGGIATTWAFFLARIIAVG.

8 helical membrane passes run 73–96, 159–182, 198–222, 294–312, 349–372, 388–414, 436–458, and 533–551; these read IFSA…FHGA, LYST…FHYH, MNHH…HVSL, TAHH…GHMY, WHAQ…HHMY, LSLF…IFMV, AIIS…LYIH, and FLVH…LILL. Residues C575 and C584 each contribute to the [4Fe-4S] cluster site. 2 helical membrane-spanning segments follow: residues 591 to 612 and 665 to 687; these read HVFL…HFSW and LSAY…MFLF. Chlorophyll a' is bound at residue H676. The chlorophyll a site is built by M684 and Y692. Phylloquinone is bound at residue W693. The chain crosses the membrane as a helical span at residues 725-745; sequence AVGVAHYLLGGIATTWAFFLA.

It belongs to the PsaA/PsaB family. As to quaternary structure, the PsaA/B heterodimer binds the P700 chlorophyll special pair and subsequent electron acceptors. PSI consists of a core antenna complex that captures photons, and an electron transfer chain that converts photonic excitation into a charge separation. The eukaryotic PSI reaction center is composed of at least 11 subunits. It depends on P700 is a chlorophyll a/chlorophyll a' dimer, A0 is one or more chlorophyll a, A1 is one or both phylloquinones and FX is a shared 4Fe-4S iron-sulfur center. as a cofactor.

It localises to the plastid. Its subcellular location is the chloroplast thylakoid membrane. It carries out the reaction reduced [plastocyanin] + hnu + oxidized [2Fe-2S]-[ferredoxin] = oxidized [plastocyanin] + reduced [2Fe-2S]-[ferredoxin]. Functionally, psaA and PsaB bind P700, the primary electron donor of photosystem I (PSI), as well as the electron acceptors A0, A1 and FX. PSI is a plastocyanin/cytochrome c6-ferredoxin oxidoreductase, converting photonic excitation into a charge separation, which transfers an electron from the donor P700 chlorophyll pair to the spectroscopically characterized acceptors A0, A1, FX, FA and FB in turn. Oxidized P700 is reduced on the lumenal side of the thylakoid membrane by plastocyanin or cytochrome c6. The sequence is that of Photosystem I P700 chlorophyll a apoprotein A1 from Nephroselmis olivacea (Green alga).